A 1146-amino-acid chain; its full sequence is Probable transport protein MmpL12 (1146 aa).

Transmembrane regions (helical) follow at residues leucine 25–leucine 45, valine 206–leucine 226, alanine 254–isoleucine 274, isoleucine 298–phenylalanine 318, alanine 330–leucine 350, threonine 382–isoleucine 402, phenylalanine 826–leucine 846, isoleucine 850–valine 870, leucine 883–isoleucine 903, valine 928–isoleucine 948, and asparagine 949–valine 969.

It belongs to the resistance-nodulation-cell division (RND) (TC 2.A.6) family. MmpL subfamily.

The protein resides in the cell membrane. In Mycobacterium tuberculosis (strain CDC 1551 / Oshkosh), this protein is Probable transport protein MmpL12 (mmpL12).